A 359-amino-acid polypeptide reads, in one-letter code: Mannose-1-phosphate guanylyltransferase catalytic subunit beta (359 aa).

The tract at residues 2–221 (KALILVGGFG…EGFWMDVGQP (220 aa)) is substrate-binding domain. Asp-109 serves as a coordination point for GDP-alpha-D-mannose. Residue Asp-109 coordinates Mg(2+). The active site involves Lys-161. Asp-217 provides a ligand contact to GDP-alpha-D-mannose. Asp-217 serves as a coordination point for Mg(2+). Residues 244 to 359 (ATGNGIIGPV…SSIPEPEIIM (116 aa)) form a hexapeptide repeat domain region.

The protein belongs to the transferase hexapeptide repeat family. As to quaternary structure, component of the GMPPA-GMPPB mannose-1-phosphate guanylyltransferase complex composed of 4 GMPPA subunits and 8 gmppB subunits; the complex is organized into three layers, a central layer made up of 2 gmppA dimers sandwiched between two layers each made up of 2 gmppB dimers. gmppB catalytic activity is reduced when part of the complex and binding of GDP-alpha-D-Mannose by gmppA induces allosteric feedback inhibition of gmppB. Requires Mg(2+) as cofactor.

The catalysed reaction is alpha-D-mannose 1-phosphate + GTP + H(+) = GDP-alpha-D-mannose + diphosphate. It participates in nucleotide-sugar biosynthesis; GDP-alpha-D-mannose biosynthesis; GDP-alpha-D-mannose from alpha-D-mannose 1-phosphate (GTP route): step 1/1. Enzyme activity is reduced by incorporation into the GMPPA-GMPPB mannose-1-phosphate guanylyltransferase complex. Allosterically inhibited, when part of the GMPPA-GMPPB complex, by GDP-alpha-D-mannose binding to GMPPA. Functionally, catalytic subunit of the GMPPA-GMPPB mannose-1-phosphate guanylyltransferase complex. Catalyzes the formation of GDP-mannose, an essential precursor of glycan moieties of glycoproteins and glycolipids. Can catalyze the reverse reaction in vitro. Together with GMPPA regulates GDP-alpha-D-mannose levels. In Dictyostelium discoideum (Social amoeba), this protein is Mannose-1-phosphate guanylyltransferase catalytic subunit beta (gmppB).